A 622-amino-acid polypeptide reads, in one-letter code: MITAADFYHVMTAMVPLYVAMILAYGSVKWWKIFTPDQCSGINRFVALFAVPLLSFHFIAANNPYAMNLRFLAADSLQKVIVLSLLFLWCKLSRNGSLDWTITLFSLSTLPNTLVMGIPLLKGMYGNFSGDLMVQIVVLQCIIWYTLMLFLFEYRGAKLLISEQFPDTAGSIVSIHVDSDIMSLDGRQPLETEAEIKEDGKLHVTVRRSNASRSDIYSRRSQGLSATPRPSNLTNAEIYSLQSSRNPTPRGSSFNHTDFYSMMASGGGRNSNFGPGEAVFGSKGPTPRPSNYEEDGGPAKPTAAGTAAGAGRFHYQSGGSGGGGGAHYPAPNPGMFSPNTGGGGGTAAKGNAPVVGGKRQDGNGRDLHMFVWSSSASPVSDVFGGGGGNHHADYSTATNDHQKDVKISVPQGNSNDNQYVEREEFSFGNKDDDSKVLATDGGNNISNKTTQAKVMPPTSVMTRLILIMVWRKLIRNPNSYSSLFGITWSLISFKWNIEMPALIAKSISILSDAGLGMAMFSLGLFMALNPRIIACGNRRAAFAAAMRFVVGPAVMLVASYAVGLRGVLLHVAIIQAALPQGIVPFVFAKEYNVHPDILSTAVIFGMLIALPITLLYYILLGL.

The Extracellular segment spans residues 1-6 (MITAAD). Residues 7–27 (FYHVMTAMVPLYVAMILAYGS) form a helical membrane-spanning segment. The Cytoplasmic segment spans residues 28-44 (VKWWKIFTPDQCSGINR). The chain crosses the membrane as a helical span at residues 45–65 (FVALFAVPLLSFHFIAANNPY). Val51 provides a ligand contact to (indol-3-yl)acetate. The Extracellular segment spans residues 66–70 (AMNLR). A helical transmembrane segment spans residues 71-91 (FLAADSLQKVIVLSLLFLWCK). The Cytoplasmic portion of the chain corresponds to 92-100 (LSRNGSLDW). A helical membrane pass occupies residues 101-121 (TITLFSLSTLPNTLVMGIPLL). The (indol-3-yl)acetate site is built by Asn112 and Leu114. The Extracellular segment spans residues 122–131 (KGMYGNFSGD). N-linked (GlcNAc...) asparagine glycosylation is present at Asn127. Residues 132–152 (LMVQIVVLQCIIWYTLMLFLF) traverse the membrane as a helical segment. Tyr145 serves as a coordination point for (indol-3-yl)acetate. At 153 to 482 (EYRGAKLLIS…LIRNPNSYSS (330 aa)) the chain is on the cytoplasmic side. Phosphoserine occurs at positions 209, 212, 221, and 225. The interval 213–233 (RSDIYSRRSQGLSATPRPSNL) is disordered. Phosphothreonine is present on Thr227. Ser231 is modified (phosphoserine). Residue Thr248 is modified to Phosphothreonine. 3 positions are modified to phosphoserine: Ser252, Ser253, and Ser271. The disordered stretch occupies residues 268–362 (GRNSNFGPGE…PVVGGKRQDG (95 aa)). Thr286 carries the phosphothreonine modification. Position 290 is a phosphoserine (Ser290). Over residues 298–311 (PAKPTAAGTAAGAG) the composition is skewed to low complexity. Thr302 bears the Phosphothreonine mark. Phosphoserine occurs at positions 317, 320, and 337. A Phosphothreonine modification is found at Thr340. 7 positions are modified to phosphoserine: Ser374, Ser377, Ser408, Ser414, Ser426, Ser434, and Ser446. The helical transmembrane segment at 483–503 (LFGITWSLISFKWNIEMPALI) threads the bilayer. Topologically, residues 504-506 (AKS) are extracellular. A helical transmembrane segment spans residues 507–527 (ISILSDAGLGMAMFSLGLFMA). The Cytoplasmic segment spans residues 528 to 541 (LNPRIIACGNRRAA). The helical transmembrane segment at 542–562 (FAAAMRFVVGPAVMLVASYAV) threads the bilayer. Residues 563 to 566 (GLRG) are Extracellular-facing. The helical transmembrane segment at 567-587 (VLLHVAIIQAALPQGIVPFVF) threads the bilayer. (indol-3-yl)acetate-binding residues include Ile582 and Val583. Residues 588 to 601 (AKEYNVHPDILSTA) lie on the Cytoplasmic side of the membrane. A helical transmembrane segment spans residues 602–622 (VIFGMLIALPITLLYYILLGL).

This sequence belongs to the auxin efflux carrier (TC 2.A.69.1) family. In terms of assembly, homodimer. Interacts with TOPP4. Interacts with FYPP1 and FYPP3. Component of a complex made of PINs (e.g. PIN1 and PIN2), MAB4/MELs (e.g. NPY1/MAB4 and NPY5/MEL1) and AGC kinases (e.g. D6PK and PID) at the plasma membrane. Binds directly to NPY5/MEL1. Expressed at the basal side of elongated parenchymatous xylem cells.

It is found in the cell membrane. Its activity is regulated as follows. Auxin efflux carrier activity is competitively inhibited by naptalamate (N-1-naphthylphthalamic acid, NPA) but activated by D6PK-mediated phosphorylation. Its function is as follows. Acts as a component of the auxin efflux carrier; this activity is enhanced when activated by D6PK-mediated phosphorylation. Binds auxins including indole-3-acetic acid (IAA), indole-3-butyric acid (IBA), indole-3-propionic acid (IPA) and 4-chloroindole-3-acetic acid (4-Cl-IAA). Seems to be involved in the basipetal auxin transport. Mediates the formation of auxin gradient which is required to ensure correct organogenesis. Coordinated polar localization of PIN1 is directly regulated by the vesicle trafficking process and apical-basal PIN1 polarity also depends on the phosphorylation of conserved serine residues by PID kinase. The ARF-GEF protein GNOM is required for the correct recycling of PIN1 between the plasma membrane and endosomal compartments. Recrutes NPY proteins (e.g. NPY1/MAB4 and NPY5/MEL1) to the plasma membrane in a polar basal localization in root epidermis; this activity is optimized by AGC kinases-mediated (e.g. D6PK and PID) phosphorylation that limits their lateral diffusion-based escape. The polypeptide is Auxin efflux carrier component 1 (Arabidopsis thaliana (Mouse-ear cress)).